The following is a 123-amino-acid chain: ATP synthase epsilon chain (123 aa).

The protein belongs to the ATPase epsilon chain family. As to quaternary structure, F-type ATPases have 2 components, CF(1) - the catalytic core - and CF(0) - the membrane proton channel. CF(1) has five subunits: alpha(3), beta(3), gamma(1), delta(1), epsilon(1). CF(0) has three main subunits: a, b and c.

Its subcellular location is the cell membrane. In terms of biological role, produces ATP from ADP in the presence of a proton gradient across the membrane. The chain is ATP synthase epsilon chain from Corynebacterium diphtheriae (strain ATCC 700971 / NCTC 13129 / Biotype gravis).